The chain runs to 249 residues: Isoprenyl transferase (249 aa).

Aspartate 25 is a catalytic residue. Aspartate 25 provides a ligand contact to Mg(2+). Substrate contacts are provided by residues 26–29, tryptophan 30, arginine 38, histidine 42, and 70–72; these read GNGR and STE. The active-site Proton acceptor is the asparagine 73. Residues tryptophan 74, arginine 76, arginine 197, and 203 to 205 contribute to the substrate site; that span reads RLS. Glutamate 216 is a binding site for Mg(2+).

This sequence belongs to the UPP synthase family. Homodimer. Mg(2+) serves as cofactor.

Its function is as follows. Catalyzes the condensation of isopentenyl diphosphate (IPP) with allylic pyrophosphates generating different type of terpenoids. This chain is Isoprenyl transferase, found in Streptococcus mutans serotype c (strain ATCC 700610 / UA159).